Reading from the N-terminus, the 215-residue chain is Vesicle-trafficking protein SEC22b (215 aa).

At 2–194 (VLLTMIARVA…KYLNMRSTYA (193 aa)) the chain is on the cytoplasmic side. The region spanning 6-119 (MIARVADGLP…YSFIEFDTFI (114 aa)) is the Longin domain. N6-acetyllysine is present on Lys38. The region spanning 134–194 (NLGSINTELQ…KYLNMRSTYA (61 aa)) is the v-SNARE coiled-coil homology domain. Ser137 carries the phosphoserine modification. A Phosphothreonine modification is found at Thr140. Ser164, Ser168, Ser174, and Ser177 each carry phosphoserine. The helical; Anchor for type IV membrane protein transmembrane segment at 195 to 215 (KLAAVAVFFIMLIVYVRFWWL) threads the bilayer.

Belongs to the synaptobrevin family. Interacts with STX17. Component of two distinct SNARE complexes consisting of STX5, GOSR2/BOS1, BET1 and SEC22B or STX18, USE1L, BNIP1/SEC20L and SEC22B. YKT6 can probably replace SEC22B in either complex. Interacts with the COPII Sec23/24 complex composed of SEC23A and SEC24A; recruits SEC22B into COPII-coated vesicles to allow its transport from the endoplasmic reticulum to the Golgi. Interacts with BET1.

It localises to the endoplasmic reticulum membrane. The protein resides in the endoplasmic reticulum-Golgi intermediate compartment membrane. Its subcellular location is the golgi apparatus. The protein localises to the cis-Golgi network membrane. It is found in the trans-Golgi network membrane. It localises to the melanosome. Its function is as follows. SNARE involved in targeting and fusion of ER-derived transport vesicles with the Golgi complex as well as Golgi-derived retrograde transport vesicles with the ER. This is Vesicle-trafficking protein SEC22b (SEC22B) from Homo sapiens (Human).